A 208-amino-acid chain; its full sequence is Putative 3-methyladenine DNA glycosylase (208 aa).

It belongs to the DNA glycosylase MPG family.

In Lactobacillus johnsonii (strain CNCM I-12250 / La1 / NCC 533), this protein is Putative 3-methyladenine DNA glycosylase.